A 59-amino-acid polypeptide reads, in one-letter code: Large ribosomal subunit protein uL30 (59 aa).

The protein belongs to the universal ribosomal protein uL30 family. In terms of assembly, part of the 50S ribosomal subunit.

In Herminiimonas arsenicoxydans, this protein is Large ribosomal subunit protein uL30.